The following is a 421-amino-acid chain: NADH-quinone oxidoreductase subunit F (421 aa).

Gly-54 to Gly-63 contacts NAD(+). An FMN-binding site is contributed by Gly-166 to Ser-213. 4 residues coordinate [4Fe-4S] cluster: Cys-344, Cys-347, Cys-350, and Cys-390.

The protein belongs to the complex I 51 kDa subunit family. FMN serves as cofactor. It depends on [4Fe-4S] cluster as a cofactor.

It carries out the reaction a quinone + NADH + 5 H(+)(in) = a quinol + NAD(+) + 4 H(+)(out). In terms of biological role, NDH-1 shuttles electrons from NADH, via FMN and iron-sulfur (Fe-S) centers, to quinones in the respiratory chain. Couples the redox reaction to proton translocation (for every two electrons transferred, four hydrogen ions are translocated across the cytoplasmic membrane), and thus conserves the redox energy in a proton gradient. This Rickettsia rickettsii (strain Sheila Smith) protein is NADH-quinone oxidoreductase subunit F (nuoF).